The following is a 3767-amino-acid chain: Transmembrane cell adhesion receptor mua-3 (3767 aa).

The first 24 residues, 1-24 (MQAGISIFFLFLHIPIFFVNCSNS), serve as a signal peptide directing secretion. Over 25–3417 (TSCVAREEFQ…CQVAPSNASL (3393 aa)) the chain is Extracellular. An LDL-receptor class A 1 domain is found at 26–63 (SCVAREEFQCKMDDSCISMKKWQDGVDDCYDGSDEVCL). 10 cysteine pairs are disulfide-bonded: Cys-27–Cys-41, Cys-35–Cys-54, Cys-62–Cys-76, Cys-69–Cys-89, Cys-97–Cys-110, Cys-104–Cys-123, Cys-131–Cys-144, Cys-138–Cys-157, Cys-165–Cys-179, and Cys-172–Cys-192. 3 consecutive LDL-receptor class A domains span residues 96–132 (GCPA…EPCA), 133–166 (QNQF…EECT), and 167–209 (TSQF…ANCT). N-linked (GlcNAc...) asparagine glycosylation is found at Asn-201 and Asn-207. EGF-like domains follow at residues 225–268 (KLKF…DKCI), 375–416 (NRDD…GTCR), 418–466 (LIDE…RKCR), 468–517 (LINE…RNCT), 519–566 (AINE…RKCV), 614–663 (RANP…RKCV), 665–713 (AVDE…RSCK), 714–760 (KADM…RVCR), 762–810 (VVNE…KNCV), 816–860 (DPPE…GRCV), 861–908 (VINE…RICR), 910–961 (RVNE…RRCI), 963–1012 (AVNE…RICT), 1029–1070 (TDDG…GSCR), 1071–1118 (VYSA…RICK), 1120–1168 (LINE…RQCT), and 1170–1219 (SNNE…RVCT). 51 cysteine pairs are disulfide-bonded: Cys-229/Cys-243, Cys-235/Cys-252, Cys-254/Cys-267, Cys-381/Cys-392, Cys-386/Cys-402, Cys-404/Cys-415, Cys-422/Cys-435, Cys-429/Cys-444, Cys-446/Cys-465, Cys-472/Cys-486, Cys-480/Cys-495, Cys-497/Cys-516, Cys-523/Cys-536, Cys-530/Cys-545, Cys-547/Cys-565, Cys-618/Cys-632, Cys-626/Cys-642, Cys-644/Cys-662, Cys-669/Cys-682, Cys-676/Cys-691, Cys-693/Cys-712, Cys-718/Cys-729, Cys-723/Cys-738, Cys-740/Cys-759, Cys-766/Cys-779, Cys-773/Cys-788, Cys-790/Cys-809, Cys-820/Cys-836, Cys-828/Cys-845, Cys-847/Cys-859, Cys-865/Cys-879, Cys-873/Cys-888, Cys-890/Cys-907, Cys-914/Cys-930, Cys-924/Cys-939, Cys-941/Cys-960, Cys-967/Cys-981, Cys-975/Cys-990, Cys-992/Cys-1011, Cys-1033/Cys-1046, Cys-1040/Cys-1055, Cys-1057/Cys-1069, Cys-1075/Cys-1087, Cys-1081/Cys-1096, Cys-1098/Cys-1117, Cys-1124/Cys-1137, Cys-1131/Cys-1146, Cys-1148/Cys-1167, Cys-1174/Cys-1188, Cys-1182/Cys-1197, and Cys-1199/Cys-1218. An N-linked (GlcNAc...) asparagine glycan is attached at Asn-383. A glycan (N-linked (GlcNAc...) asparagine) is linked at Asn-515. Positions 1230–1406 (DLVFLIDGSG…DLDTRLRSMI (177 aa)) constitute a VWFA domain. N-linked (GlcNAc...) asparagine glycosylation is present at Asn-1350. 29 EGF-like domains span residues 1421–1466 (SEDV…RVCG), 1466–1510 (GGDL…GFCV), 1521–1562 (HDAN…GQCA), 1563–1608 (YPGS…DICL), 1608–1656 (LKNE…RVCV), 1658–1706 (LQNE…MVCK), 1708–1755 (LVNE…RRCE), 1759–1807 (TNDK…RLCI), 1809–1860 (VIPE…RLCK), 1862–1911 (LQNE…RKCK), 1913–1961 (LINE…RRCL), 1963–2011 (RINE…RICR), 2014–2062 (LVDE…RLCQ), 2068–2112 (PPPE…GSCS), 2113–2160 (IINE…RMCK), 2162–2208 (MVNE…RICK), 2210–2258 (LTNE…RACR), 2260–2308 (LVNE…RVCL), 2310–2358 (FINE…RVCV), 2360–2408 (LVDE…RVCS), 2409–2455 (APEV…RVCV), 2456–2504 (RNNA…RVCE), 2513–2563 (PRHP…RLCV), 2565–2616 (TEPV…RICK), 2618–2666 (LINE…RICS), 2668–2714 (SVNE…HRCS), 2716–2763 (MINE…RICR), 2763–2811 (RLNE…RICI), and 2833–2872 (REFP…GKCQ). 66 cysteine pairs are disulfide-bonded: Cys-1425/Cys-1441, Cys-1433/Cys-1450, Cys-1452/Cys-1465, Cys-1470/Cys-1484, Cys-1478/Cys-1494, Cys-1496/Cys-1509, Cys-1525/Cys-1538, Cys-1532/Cys-1547, Cys-1549/Cys-1561, Cys-1567/Cys-1583, Cys-1575/Cys-1592, Cys-1594/Cys-1607, Cys-1612/Cys-1625, Cys-1619/Cys-1634, Cys-1636/Cys-1655, Cys-1662/Cys-1675, Cys-1669/Cys-1684, Cys-1686/Cys-1705, Cys-1712/Cys-1726, Cys-1720/Cys-1735, Cys-1737/Cys-1754, Cys-1763/Cys-1776, Cys-1770/Cys-1786, Cys-1788/Cys-1806, Cys-1813/Cys-1829, Cys-1821/Cys-1838, Cys-1840/Cys-1859, Cys-1866/Cys-1880, Cys-1873/Cys-1889, Cys-1891/Cys-1910, Cys-1917/Cys-1930, Cys-1924/Cys-1939, Cys-1941/Cys-1960, Cys-1967/Cys-1980, Cys-1974/Cys-1989, Cys-1991/Cys-2010, Cys-2018/Cys-2031, Cys-2025/Cys-2040, Cys-2042/Cys-2061, Cys-2072/Cys-2088, Cys-2080/Cys-2097, Cys-2099/Cys-2111, Cys-2117/Cys-2131, Cys-2125/Cys-2140, Cys-2142/Cys-2159, Cys-2166/Cys-2180, Cys-2174/Cys-2189, Cys-2191/Cys-2207, Cys-2214/Cys-2228, Cys-2222/Cys-2237, Cys-2239/Cys-2257, Cys-2264/Cys-2278, Cys-2272/Cys-2287, Cys-2289/Cys-2307, Cys-2314/Cys-2327, Cys-2321/Cys-2336, Cys-2338/Cys-2357, Cys-2364/Cys-2377, Cys-2371/Cys-2386, Cys-2388/Cys-2407, Cys-2413/Cys-2425, Cys-2419/Cys-2435, Cys-2437/Cys-2454, Cys-2460/Cys-2474, Cys-2468/Cys-2483, and Cys-2485/Cys-2503. Residues 2492-2521 (RSPDSSQRGRVCEPPPPPSPPPRHPCQDPE) are disordered. Positions 2504–2515 (EPPPPPSPPPRH) are enriched in pro residues. 21 disulfides stabilise this stretch: Cys-2517–Cys-2531, Cys-2525–Cys-2541, Cys-2543–Cys-2562, Cys-2569–Cys-2583, Cys-2577–Cys-2594, Cys-2596–Cys-2615, Cys-2622–Cys-2636, Cys-2630–Cys-2645, Cys-2647–Cys-2665, Cys-2672–Cys-2686, Cys-2680–Cys-2695, Cys-2697–Cys-2713, Cys-2720–Cys-2734, Cys-2728–Cys-2743, Cys-2745–Cys-2762, Cys-2767–Cys-2781, Cys-2775–Cys-2790, Cys-2792–Cys-2810, Cys-2837–Cys-2850, Cys-2842–Cys-2856, and Cys-2858–Cys-2871. The 127-residue stretch at 2873-2999 (EVQETPFELR…GSLRVASDTD (127 aa)) folds into the SEA 1 domain. N-linked (GlcNAc...) asparagine glycosylation is present at Asn-2944. One can recognise an EGF-like 47 domain in the interval 3009 to 3048 (EWGNCGGMSCKEHLKEVCIAGHICGCPDGMKRRDANSECR). Cystine bridges form between Cys-3013/Cys-3026, Cys-3018/Cys-3032, and Cys-3034/Cys-3047. The SEA 2 domain maps to 3049 to 3174 (VVESWNVPLW…SELYLNPTQP (126 aa)). Asn-3120 and Asn-3130 each carry an N-linked (GlcNAc...) asparagine glycan. EGF-like domains lie at 3176-3220 (PFNP…KKCL), 3224-3272 (GFNE…SLCV), and 3272-3324 (VLDY…TLCM). 15 cysteine pairs are disulfide-bonded: Cys-3180–Cys-3191, Cys-3185–Cys-3201, Cys-3203–Cys-3219, Cys-3228–Cys-3242, Cys-3236–Cys-3251, Cys-3253–Cys-3271, Cys-3276–Cys-3288, Cys-3282–Cys-3297, Cys-3299–Cys-3323, Cys-3332–Cys-3345, Cys-3339–Cys-3354, Cys-3356–Cys-3372, Cys-3377–Cys-3386, Cys-3380–Cys-3397, and Cys-3399–Cys-3408. Asn-3285 carries N-linked (GlcNAc...) asparagine glycosylation. One can recognise an EGF-like 51; calcium-binding domain in the interval 3328 to 3373 (DVDECALGLNNCSGVAHCIDRAVGYTCKCPDGYIDGNPDEPGRVCG). Residue Asn-3337 is glycosylated (N-linked (GlcNAc...) asparagine; atypical). Residue Asn-3338 is glycosylated (N-linked (GlcNAc...) asparagine). The region spanning 3373–3409 (GALLCDLCNAHGDCVHNTATNNITCVCTDGWTGPQCQ) is the EGF-like 52 domain. Residue Asn-3394 is glycosylated (N-linked (GlcNAc...) asparagine). Residue Asn-3414 is glycosylated (N-linked (GlcNAc...) asparagine). The helical transmembrane segment at 3418–3438 (VLLILLALLFLLLTLCCLLYF) threads the bilayer. Residues 3439–3767 (CTKCHCFKGR…SQTSTHVTKK (329 aa)) lie on the Cytoplasmic side of the membrane. Residues 3582–3729 (TTTTDEQGNT…EEDVEHSVGD (148 aa)) are disordered. Residues 3588-3597 (QGNTIVTTTE) show a composition bias toward polar residues. Residues 3630–3665 (QSQSQQQQSMSQGMSQSMSQHATSAGYSSSGMESSA) are compositionally biased toward low complexity. Over residues 3675 to 3684 (HTGERERGGS) the composition is skewed to basic and acidic residues. A compositionally biased stretch (low complexity) spans 3690-3702 (IGRARGMAAASSG).

In terms of tissue distribution, expressed in the hypodermis at the sites of muscle contact, in striated muscles including body wall muscles, the anal sphincter muscles and the junctions between the anal sphincter muscle and rectal cuticle. Also expressed in non-muscle cells including the excretory duct cell and pore cells.

It is found in the cell membrane. Its subcellular location is the cell junction. The protein localises to the hemidesmosome. Functionally, involved in cell adhesion and required for organ positioning and attachment. At the hypodermal surface, required for attachment of the hypdermermis to the basal cuticle in postembryonic development, possibly through intermediate filaments of the cytoskeleton. In Caenorhabditis elegans, this protein is Transmembrane cell adhesion receptor mua-3.